A 306-amino-acid polypeptide reads, in one-letter code: Diterpene cyclase eriG (306 aa).

2 helical membrane passes run 13–33 (IFFG…SIFA) and 43–63 (ATLV…IYFF). An N-linked (GlcNAc...) asparagine glycan is attached at N64. Transmembrane regions (helical) follow at residues 115-135 (FLPE…TSYG), 161-181 (IAPA…WAGL), 213-233 (LIIT…AGIF), and 265-285 (MFYT…GLGL).

The protein belongs to the UbiA prenyltransferase family. Mg(2+) is required as a cofactor.

The protein localises to the membrane. It catalyses the reaction (2E,6E,10E)-geranylgeranyl diphosphate = (-)-cyatha-3,12-diene + diphosphate. It functions in the pathway secondary metabolite biosynthesis. EDTA completely blocks the reaction. Functionally, diterpene cyclase; part of the gene cluster that mediates the biosynthesis of erinacines, cyathane-xylosides that show unique biological activities, including leishmanicidal activity, stimulating activity for nerve growth-factor synthesis, and agonistic activity toward the kappa opioid receptor. Within the pathway, eriG acts as a diterpene cyclase that converts geranylgeranyl diphosphate (GGPP) into cyatha-3,12-diene. EriG is unable to use geranyl diphosphate (GPP) or farnesyl diphosphate (FPP) as substrates. The first step of the erinacines biosynthesis pathway is catalyzed by the geranylgeranyl diphosphate (GGPP) synthase eriE via conversion of farnesyl pyrophosphate and isopentyl pyrophosphate into geranylgeranyl pyrophosphate (GGPP). GGPP is then substrate of the diterpene cyclase eriG for the production of cyatha-3,12-diene. The cytochrome P450 monooxygenase eriI then hydroxylates cyatha-3,12-diene at C-14 of the seven-membered ring to produce erinacol, which is further hydroxylated at C-15 by the cytochrome P450 monooxygenase eriC to yield cyathadiol. The cytochrome P450 monooxygenase eriA then catalyzes C-11 hydroxylation in the presence of the short chain dehydrogenase/reductase (SDR) eriH, which leads to the production of cyathatriol. The acetyltransferase eriL converts cyathatriol into 11-O-acetyl-cyathatriol. The SDR eriH catalyzes further oxidation of 11-O-acetyl-cyathatriol into 1-O-acetylcyathin A3. Finally, the glycosyl transferase eriJ tranfers xylose from UDP-xylose onto C-14 of 11-O-acetyl-cyathatriol to form eracine Q. EriJ is also able to convert 11-O-acetyl-cyathatriol to eracine Q2 by using UDP-D-glucose as cosubstrate, but at a lower rate. The chain is Diterpene cyclase eriG from Hericium erinaceus (Lion's mane mushroom).